The chain runs to 320 residues: Dipeptide transport system permease protein DppC (320 aa).

The next 6 membrane-spanning stretches (helical) occupy residues L56–F76, L121–V141, M154–M176, L230–A252, F267–W287, and L289–G309. An ABC transmembrane type-1 domain is found at A117–G307.

It belongs to the binding-protein-dependent transport system permease family. OppBC subfamily.

Its subcellular location is the cell membrane. Functionally, probably part of the ABC transporter DppBCDE involved in dipeptide transport. Responsible for the translocation of the substrate across the membrane. The sequence is that of Dipeptide transport system permease protein DppC (dppC) from Bacillus subtilis (strain 168).